The chain runs to 484 residues: DNA-binding protein (484 aa).

The disordered stretch occupies residues 1–69 (MASNQHSQRE…ESAEEEEAEP (69 aa)). A compositionally biased stretch (low complexity) spans 51–60 (SMAAIPLSPE). Phosphotyrosine; by host is present on tyrosine 150. Positions 239 and 241 each coordinate Zn(2+). Residues 252-286 (VEMDVTSESGQRALKENPSKAKVAQNRWGRNVVQI) are flexible loop. The Zn(2+) site is built by cysteine 294, cysteine 310, cysteine 351, cysteine 353, cysteine 405, and cysteine 421. The tract at residues 468–484 (ISLPTNHGDCREEPFDF) is C-terminal arm, DBP binding.

It belongs to the adenoviridae E2A DNA-binding protein family. Homomultimerizes on viral ssDNA bound to pTP. Forms a initiation complex with viral polymerase, pTP and hosts NFIA and POU2F1/OCT1. Interacts with host SRCAP.

The protein resides in the host nucleus. Functionally, plays a role in the elongation phase of viral strand displacement replication by unwinding the template in an ATP-independent fashion, employing its capacity to form multimers. Also enhances the rate of initiation. Released from template upon second strand synthesis. Assembles in complex with viral pTP, viral pol, host NFIA and host POU2F1/OCT1 on viral origin of replication. Covers the whole ssDNA genome during synthesis. The complementary strand synthesis induces its relese from DNA template. May inhibit cellular transcription mediated by the interaction between host SRCAP and CBP. The polypeptide is DNA-binding protein (Human adenovirus A serotype 12 (HAdV-12)).